A 45-amino-acid polypeptide reads, in one-letter code: Large ribosomal subunit protein bL34 (45 aa).

The segment covering 1 to 20 (MSKRTYQPNKRKRLKTHGFR) has biased composition (basic residues). Positions 1–45 (MSKRTYQPNKRKRLKTHGFRSRMSTASGRRIISCRRRKNRETLTA) are disordered.

This sequence belongs to the bacterial ribosomal protein bL34 family.

The polypeptide is Large ribosomal subunit protein bL34 (Tropheryma whipplei (strain Twist) (Whipple's bacillus)).